Reading from the N-terminus, the 88-residue chain is Small ribosomal subunit protein uS15c (88 aa).

Belongs to the universal ribosomal protein uS15 family. As to quaternary structure, part of the 30S ribosomal subunit.

It localises to the plastid. The protein resides in the chloroplast. The sequence is that of Small ribosomal subunit protein uS15c (rps15) from Marchantia polymorpha (Common liverwort).